Reading from the N-terminus, the 113-residue chain is Cytochrome c oxidase subunit 7A2-like, mitochondrial (113 aa).

The N-terminal 54 residues, 1–54 (MYYKFSSFTQKLAGAWASEAYTPQGLKPVSTEAPPIIFATPTKLTSSVTAYDYS), are a transit peptide targeting the mitochondrion. Lys-68 is subject to N6-acetyllysine. Residues 81-106 (PDQMLYRTTMALTLGGTIYCLIALYM) traverse the membrane as a helical segment.

The protein belongs to the cytochrome c oxidase VIIa family. In terms of assembly, interacts with the mitochondrial respiratory complexes III (CIII) and IV (CIV), promoting their association.

Its subcellular location is the mitochondrion inner membrane. It participates in energy metabolism; oxidative phosphorylation. In terms of biological role, assembly factor that mediates the formation of some mitochondrial respiratory supercomplexes (respirasomes), thereby promoting oxidative phosphorylation and energy metabolism. Acts as a molecular adapter that associates with both mitochondrial respiratory complexes III (CIII) and IV (CIV), promoting their association. Mediates the formation of various mitochondrial respiratory supercomplexes, such as MCIII(2)IV(2), composed of two CIII and two CIV, and the CS-respirasome (MCI(1)III(2)IV(2)), composed of one CI, two CIII and two CIV. Not involved in the formation of the canonical respirasome (MCI(1)III(2)IV(1)), composed of one CI, two CIII and one CIV. The formation of different respirasomes is important for cell adaptation to oxygen conditions and prevent metabolic exhaustion: supercomplexes mediated by COX7A2L/SCAF1 are required to maintain oxidative phosphorylation upon low oxygen conditions and promote metabolic rewiring toward glycolysis. This Mus musculus (Mouse) protein is Cytochrome c oxidase subunit 7A2-like, mitochondrial.